The primary structure comprises 491 residues: UDP-N-acetylmuramoyl-L-alanyl-D-glutamate--2,6-diaminopimelate ligase (491 aa).

Serine 30 provides a ligand contact to UDP-N-acetyl-alpha-D-muramoyl-L-alanyl-D-glutamate. Residue 108-114 (GTNGKTT) participates in ATP binding. UDP-N-acetyl-alpha-D-muramoyl-L-alanyl-D-glutamate is bound by residues asparagine 149, 150–151 (TT), serine 177, glutamine 183, and arginine 185. Lysine 217 is modified (N6-carboxylysine). Meso-2,6-diaminopimelate contacts are provided by residues arginine 383, 407-410 (DNPR), glycine 458, and glutamate 462. A Meso-diaminopimelate recognition motif motif is present at residues 407 to 410 (DNPR).

The protein belongs to the MurCDEF family. MurE subfamily. It depends on Mg(2+) as a cofactor. Post-translationally, carboxylation is probably crucial for Mg(2+) binding and, consequently, for the gamma-phosphate positioning of ATP.

The protein localises to the cytoplasm. It carries out the reaction UDP-N-acetyl-alpha-D-muramoyl-L-alanyl-D-glutamate + meso-2,6-diaminopimelate + ATP = UDP-N-acetyl-alpha-D-muramoyl-L-alanyl-gamma-D-glutamyl-meso-2,6-diaminopimelate + ADP + phosphate + H(+). It participates in cell wall biogenesis; peptidoglycan biosynthesis. Catalyzes the addition of meso-diaminopimelic acid to the nucleotide precursor UDP-N-acetylmuramoyl-L-alanyl-D-glutamate (UMAG) in the biosynthesis of bacterial cell-wall peptidoglycan. In Listeria monocytogenes serovar 1/2a (strain ATCC BAA-679 / EGD-e), this protein is UDP-N-acetylmuramoyl-L-alanyl-D-glutamate--2,6-diaminopimelate ligase.